The primary structure comprises 399 residues: Chaperone protein DnaJ 1 (399 aa).

Positions 10–75 (DYYKVLGVPK…KKRKEYDEAR (66 aa)) constitute a J domain. The CR-type zinc finger occupies 166-244 (GATVPLRMSS…CKGSGRAKSS (79 aa)). Zn(2+)-binding residues include Cys-179, Cys-182, Cys-195, Cys-198, Cys-218, Cys-221, Cys-232, and Cys-235. CXXCXGXG motif repeat units lie at residues 179 to 186 (CKACSGTG), 195 to 202 (CPTCVGTG), 218 to 225 (CPDCKGRG), and 232 to 239 (CEVCKGSG).

It belongs to the DnaJ family. As to quaternary structure, homodimer. The cofactor is Zn(2+).

The protein resides in the cytoplasm. In terms of biological role, participates actively in the response to hyperosmotic and heat shock by preventing the aggregation of stress-denatured proteins and by disaggregating proteins, also in an autonomous, DnaK-independent fashion. Unfolded proteins bind initially to DnaJ; upon interaction with the DnaJ-bound protein, DnaK hydrolyzes its bound ATP, resulting in the formation of a stable complex. GrpE releases ADP from DnaK; ATP binding to DnaK triggers the release of the substrate protein, thus completing the reaction cycle. Several rounds of ATP-dependent interactions between DnaJ, DnaK and GrpE are required for fully efficient folding. Also involved, together with DnaK and GrpE, in the DNA replication of plasmids through activation of initiation proteins. The polypeptide is Chaperone protein DnaJ 1 (Streptomyces coelicolor (strain ATCC BAA-471 / A3(2) / M145)).